Here is a 636-residue protein sequence, read N- to C-terminus: Beta-galactosidase-1-like protein 2 (636 aa).

The first 32 residues, 1–32, serve as a signal peptide directing secretion; it reads MTTWSLRRRPARTLGLLLLVVLGFLVLRRLDW. Catalysis depends on Glu-201, which acts as the Proton donor. Catalysis depends on Glu-277, which acts as the Nucleophile.

The protein belongs to the glycosyl hydrolase 35 family.

The protein localises to the secreted. The chain is Beta-galactosidase-1-like protein 2 (GLB1L2) from Homo sapiens (Human).